The primary structure comprises 128 residues: Large-conductance mechanosensitive channel (128 aa).

Topologically, residues 1 to 16 are cytoplasmic; sequence MNFIKEFREFAMRGNV. A helical transmembrane segment spans residues 17–45; that stretch reads VDMAVGVIIGSAFGKIVSSLVSDIFTPVL. Over 46–74 the chain is Periplasmic; sequence GILTGGIDFKDMKFVLAQAQGDVPAVTLN. A helical transmembrane segment spans residues 75–94; that stretch reads YGLFIQNVIDFIIIAFAIFM. Over 95 to 128 the chain is Cytoplasmic; the sequence is MIKVINKVRKPEEKKTAPKAETLLTEIRDLLKNK.

Belongs to the MscL family. As to quaternary structure, homopentamer.

It is found in the cell inner membrane. Its function is as follows. Channel that opens in response to stretch forces in the membrane lipid bilayer. Forms a nonselective ion channel with a conductance of about 4 nanosiemens. May participate in the regulation of osmotic pressure changes within the cell. In Haemophilus influenzae (strain ATCC 51907 / DSM 11121 / KW20 / Rd), this protein is Large-conductance mechanosensitive channel.